We begin with the raw amino-acid sequence, 381 residues long: Putative acetyl-CoA C-acetyltransferase VraB (381 aa).

The Acyl-thioester intermediate role is filled by Cys86. The active-site Proton acceptor is His338.

This sequence belongs to the thiolase-like superfamily. Thiolase family.

This is Putative acetyl-CoA C-acetyltransferase VraB (vraB) from Staphylococcus haemolyticus (strain JCSC1435).